The sequence spans 486 residues: Protein nucleotidyltransferase YdiU (486 aa).

Gly-90, Gly-92, Arg-93, Lys-113, Asp-125, Gly-126, Arg-176, and Arg-183 together coordinate ATP. The active-site Proton acceptor is Asp-252. Asn-253 and Asp-262 together coordinate Mg(2+). Asp-262 contacts ATP.

Belongs to the SELO family. The cofactor is Mg(2+). Mn(2+) is required as a cofactor.

The enzyme catalyses L-seryl-[protein] + ATP = 3-O-(5'-adenylyl)-L-seryl-[protein] + diphosphate. It catalyses the reaction L-threonyl-[protein] + ATP = 3-O-(5'-adenylyl)-L-threonyl-[protein] + diphosphate. The catalysed reaction is L-tyrosyl-[protein] + ATP = O-(5'-adenylyl)-L-tyrosyl-[protein] + diphosphate. It carries out the reaction L-histidyl-[protein] + UTP = N(tele)-(5'-uridylyl)-L-histidyl-[protein] + diphosphate. The enzyme catalyses L-seryl-[protein] + UTP = O-(5'-uridylyl)-L-seryl-[protein] + diphosphate. It catalyses the reaction L-tyrosyl-[protein] + UTP = O-(5'-uridylyl)-L-tyrosyl-[protein] + diphosphate. Its function is as follows. Nucleotidyltransferase involved in the post-translational modification of proteins. It can catalyze the addition of adenosine monophosphate (AMP) or uridine monophosphate (UMP) to a protein, resulting in modifications known as AMPylation and UMPylation. In Pseudomonas aeruginosa (strain UCBPP-PA14), this protein is Protein nucleotidyltransferase YdiU.